Here is a 130-residue protein sequence, read N- to C-terminus: Methylglyoxal synthase (130 aa).

The 130-residue stretch at 1–130 (MSTPRIALIA…DLARRLTANA (130 aa)) folds into the MGS-like domain. Substrate is bound by residues His11, Lys15, 37-40 (TGTT), and 57-58 (SG). Asp63 (proton donor/acceptor) is an active-site residue. Substrate is bound at residue His90.

Belongs to the methylglyoxal synthase family.

It carries out the reaction dihydroxyacetone phosphate = methylglyoxal + phosphate. In terms of biological role, catalyzes the formation of methylglyoxal from dihydroxyacetone phosphate. The polypeptide is Methylglyoxal synthase (Burkholderia mallei (strain NCTC 10247)).